The chain runs to 444 residues: DNA repair protein RadA (444 aa).

The C4-type zinc finger occupies 10 to 27 (CQECGYKSVKWLGKCPSC). 91–98 (GEPGIGKS) lines the ATP pocket. The short motif at 247–251 (KNRFG) is the RadA KNRFG motif element. The lon-protease-like stretch occupies residues 345–444 (DVFVNVAGGM…HIQEAIEVLF (100 aa)).

Belongs to the RecA family. RadA subfamily.

Functionally, DNA-dependent ATPase involved in processing of recombination intermediates, plays a role in repairing DNA breaks. Stimulates the branch migration of RecA-mediated strand transfer reactions, allowing the 3' invading strand to extend heteroduplex DNA faster. Binds ssDNA in the presence of ADP but not other nucleotides, has ATPase activity that is stimulated by ssDNA and various branched DNA structures, but inhibited by SSB. Does not have RecA's homology-searching function. The chain is DNA repair protein RadA from Aquifex aeolicus (strain VF5).